Reading from the N-terminus, the 301-residue chain is N-acetylmuramic acid 6-phosphate etherase (301 aa).

One can recognise an SIS domain in the interval 57–220; it reads TYEKMLFGGR…STSLMIKKGK (164 aa). Catalysis depends on Glu85, which acts as the Proton donor. Residue Glu116 is part of the active site.

This sequence belongs to the GCKR-like family. MurNAc-6-P etherase subfamily. Homodimer.

It catalyses the reaction N-acetyl-D-muramate 6-phosphate + H2O = N-acetyl-D-glucosamine 6-phosphate + (R)-lactate. It functions in the pathway amino-sugar metabolism; N-acetylmuramate degradation. Its function is as follows. Specifically catalyzes the cleavage of the D-lactyl ether substituent of MurNAc 6-phosphate, producing GlcNAc 6-phosphate and D-lactate. The chain is N-acetylmuramic acid 6-phosphate etherase from Clostridium botulinum (strain Eklund 17B / Type B).